The primary structure comprises 300 residues: Ribosomal protein L11 methyltransferase (300 aa).

S-adenosyl-L-methionine is bound by residues threonine 152, glycine 173, aspartate 195, and asparagine 234.

This sequence belongs to the methyltransferase superfamily. PrmA family.

The protein localises to the cytoplasm. It catalyses the reaction L-lysyl-[protein] + 3 S-adenosyl-L-methionine = N(6),N(6),N(6)-trimethyl-L-lysyl-[protein] + 3 S-adenosyl-L-homocysteine + 3 H(+). Functionally, methylates ribosomal protein L11. This chain is Ribosomal protein L11 methyltransferase, found in Paraburkholderia phytofirmans (strain DSM 17436 / LMG 22146 / PsJN) (Burkholderia phytofirmans).